Consider the following 157-residue polypeptide: Small ribosomal subunit protein uS7 (157 aa).

It belongs to the universal ribosomal protein uS7 family. Part of the 30S ribosomal subunit. Contacts proteins S9 and S11.

Its function is as follows. One of the primary rRNA binding proteins, it binds directly to 16S rRNA where it nucleates assembly of the head domain of the 30S subunit. Is located at the subunit interface close to the decoding center, probably blocks exit of the E-site tRNA. This is Small ribosomal subunit protein uS7 from Chlamydia abortus (strain DSM 27085 / S26/3) (Chlamydophila abortus).